Here is a 1893-residue protein sequence, read N- to C-terminus: Serine-aspartate repeat-containing protein I (1893 aa).

Residues 1–54 (MNFKGVKLLKNSKKRLDFLPNTLNKYSIRKFTVGTASILVGATLFLGVSNEAEA) form the signal peptide. Residues 53–333 (EAAEKIDSPT…AHGINNKNKQ (281 aa)) are disordered. Basic and acidic residues predominate over residues 54–222 (AAEKIDSPTK…AEEPATKEEA (169 aa)). 21 consecutive repeat copies span residues 72–83 (AATKEEAATTEE), 84–95 (PATKEEAATTEE), 96–107 (PATKEEAAIAEE), 108–119 (PATKEEAATTEE), 120–131 (PATKEEAAIAEE), 132–143 (PATKEEAATTEE), 144–155 (PATKEEAATTEE), 156–167 (PATKEEAAIAEE), 168–179 (PATKEEAATTEE), 180–191 (PATKEEAAIAEE), 192–203 (PATKEEAVTSEE), 204–215 (AATKEKAAIAEE), 216–227 (PATKEEAAIAEE), 228–239 (PETKEEAATTEE), 240–251 (PATKEEAAIAEE), 252–263 (AATKEKAVTSEE), 264–275 (AATKEKAAIAEE), 276–287 (AATKEKAAIAEE), 288–299 (PETKEEAATTEE), 300–311 (PETKEEAAIAEE), and 312–323 (PATKEKAVTSEE). The 21 X 12 AA tandem repeat of [AP]-[AE]-T-K-E-[EK]-A-[AV]-[IT]-[AST]-E-E stretch occupies residues 72–323 (AATKEEAATT…TKEKAVTSEE (252 aa)). The segment covering 240–284 (PATKEEAAIAEEAATKEKAVTSEEAATKEKAAIAEEAATKEKAAI) has biased composition (basic and acidic residues). Acidic residues predominate over residues 286–302 (EEPETKEEAATTEEPET). The segment covering 312 to 325 (PATKEKAVTSEEAH) has biased composition (basic and acidic residues). The tract at residues 324-755 (AHGINNKNKQ…GSSTAQGDNP (432 aa)) is ligand binding A region. CNA-B domains follow at residues 756–874 (TYNL…YETP) and 875–984 (KYSL…YFDE). Positions 941–1867 (KPEGLTQTTT…GNNTQNNGTL (927 aa)) are disordered. Over residues 955 to 975 (DENKDADGEEVHVTITDHDDF) the composition is skewed to basic and acidic residues. Positions 981–1836 (YFDEDSDADA…DSDADADADS (856 aa)) are enriched in acidic residues. The segment covering 1837 to 1851 (DADKYHNDTADKSND) has biased composition (basic and acidic residues). Positions 1854 to 1858 (LPDTG) match the LPXTG sorting signal motif. Residue threonine 1857 is modified to Pentaglycyl murein peptidoglycan amidated threonine. The propeptide at 1858–1893 (GNNTQNNGTLFGSLFAALGGLFLVGSRRKNKNNEEK) is removed by sortase.

It belongs to the serine-aspartate repeat-containing protein (SDr) family.

The protein localises to the secreted. Its subcellular location is the cell wall. Responsible for collagen binding by S.saprophyticus. The chain is Serine-aspartate repeat-containing protein I (sdrI) from Staphylococcus saprophyticus.